The sequence spans 159 residues: Ribosomal RNA large subunit methyltransferase H (159 aa).

S-adenosyl-L-methionine is bound by residues Leu76, Gly108, and 127–132 (FSKMTL).

This sequence belongs to the RNA methyltransferase RlmH family. In terms of assembly, homodimer.

It is found in the cytoplasm. It carries out the reaction pseudouridine(1915) in 23S rRNA + S-adenosyl-L-methionine = N(3)-methylpseudouridine(1915) in 23S rRNA + S-adenosyl-L-homocysteine + H(+). In terms of biological role, specifically methylates the pseudouridine at position 1915 (m3Psi1915) in 23S rRNA. The polypeptide is Ribosomal RNA large subunit methyltransferase H (Bacillus cereus (strain ATCC 10987 / NRS 248)).